Reading from the N-terminus, the 680-residue chain is UvrABC system protein B (680 aa).

Residues 27 to 422 enclose the Helicase ATP-binding domain; the sequence is AGALGGVTFQ…GRMAGEHVAE (396 aa). 40 to 47 contacts ATP; that stretch reads GATGTGKT. The Beta-hairpin motif lies at 93-116; that stretch reads YYDYYQPEAYIPQTDTYIEKSASI. The Helicase C-terminal domain maps to 443-609; sequence QVDDLLHEIH…PIVKRLDANS (167 aa). A UVR domain is found at 641–676; it reads PELVSQLEIQMRDAAKKLEFEKAAEYRDKIHKLRER.

It belongs to the UvrB family. In terms of assembly, forms a heterotetramer with UvrA during the search for lesions. Interacts with UvrC in an incision complex.

The protein localises to the cytoplasm. In terms of biological role, the UvrABC repair system catalyzes the recognition and processing of DNA lesions. A damage recognition complex composed of 2 UvrA and 2 UvrB subunits scans DNA for abnormalities. Upon binding of the UvrA(2)B(2) complex to a putative damaged site, the DNA wraps around one UvrB monomer. DNA wrap is dependent on ATP binding by UvrB and probably causes local melting of the DNA helix, facilitating insertion of UvrB beta-hairpin between the DNA strands. Then UvrB probes one DNA strand for the presence of a lesion. If a lesion is found the UvrA subunits dissociate and the UvrB-DNA preincision complex is formed. This complex is subsequently bound by UvrC and the second UvrB is released. If no lesion is found, the DNA wraps around the other UvrB subunit that will check the other stand for damage. This chain is UvrABC system protein B, found in Gloeobacter violaceus (strain ATCC 29082 / PCC 7421).